Reading from the N-terminus, the 335-residue chain is 3-isopropylmalate dehydrogenase (335 aa).

Substrate contacts are provided by Arg87, Arg97, Arg121, and Asp211. Positions 211, 235, and 239 each coordinate Mg(2+). Position 271-283 (271-283 (GSAPDIAGQSKAD)) interacts with NAD(+).

The protein belongs to the isocitrate and isopropylmalate dehydrogenases family. LeuB type 2 subfamily. In terms of assembly, homodimer. The cofactor is Mg(2+). Requires Mn(2+) as cofactor.

It is found in the cytoplasm. It catalyses the reaction (2R,3S)-3-isopropylmalate + NAD(+) = 4-methyl-2-oxopentanoate + CO2 + NADH. The protein operates within amino-acid biosynthesis; L-leucine biosynthesis; L-leucine from 3-methyl-2-oxobutanoate: step 3/4. Its function is as follows. Catalyzes the oxidation of 3-carboxy-2-hydroxy-4-methylpentanoate (3-isopropylmalate) to 3-carboxy-4-methyl-2-oxopentanoate. The product decarboxylates to 4-methyl-2 oxopentanoate. This chain is 3-isopropylmalate dehydrogenase, found in Nocardia farcinica (strain IFM 10152).